Consider the following 292-residue polypeptide: uncharacterized protein (292 aa).

A helical membrane pass occupies residues 17-37 (SMDMFFFLFIFLLFIYPEMMM).

The protein to M.jannaschii MJ0137.

The protein localises to the membrane. This is an uncharacterized protein from Methanocaldococcus jannaschii (strain ATCC 43067 / DSM 2661 / JAL-1 / JCM 10045 / NBRC 100440) (Methanococcus jannaschii).